We begin with the raw amino-acid sequence, 159 residues long: Ribosomal RNA large subunit methyltransferase H (159 aa).

Residues L76, G108, and 127-132 contribute to the S-adenosyl-L-methionine site; that span reads FSRMTF.

It belongs to the RNA methyltransferase RlmH family. In terms of assembly, homodimer.

Its subcellular location is the cytoplasm. It catalyses the reaction pseudouridine(1915) in 23S rRNA + S-adenosyl-L-methionine = N(3)-methylpseudouridine(1915) in 23S rRNA + S-adenosyl-L-homocysteine + H(+). Its function is as follows. Specifically methylates the pseudouridine at position 1915 (m3Psi1915) in 23S rRNA. The polypeptide is Ribosomal RNA large subunit methyltransferase H (Clostridioides difficile (strain 630) (Peptoclostridium difficile)).